The chain runs to 186 residues: Peptide deformylase (186 aa).

Residues Cys99 and His141 each contribute to the Fe cation site. The active site involves Glu142. A Fe cation-binding site is contributed by His145.

It belongs to the polypeptide deformylase family. The cofactor is Fe(2+).

The catalysed reaction is N-terminal N-formyl-L-methionyl-[peptide] + H2O = N-terminal L-methionyl-[peptide] + formate. Its function is as follows. Removes the formyl group from the N-terminal Met of newly synthesized proteins. Requires at least a dipeptide for an efficient rate of reaction. N-terminal L-methionine is a prerequisite for activity but the enzyme has broad specificity at other positions. The chain is Peptide deformylase from Chlamydia caviae (strain ATCC VR-813 / DSM 19441 / 03DC25 / GPIC) (Chlamydophila caviae).